We begin with the raw amino-acid sequence, 74 residues long: Protein krueppel (74 aa).

C2H2-type zinc fingers lie at residues 1-4 (ERTH), 10-32 (FECP…MRLH), 38-60 (YHCS…LRVH), and 66-74 (YTCEICDGK).

It belongs to the krueppel C2H2-type zinc-finger protein family.

It localises to the nucleus. Functionally, krueppel is a gap class segmentation protein. The chain is Protein krueppel (Kr) from Musca domestica (House fly).